Here is a 134-residue protein sequence, read N- to C-terminus: NADH-quinone oxidoreductase subunit A (134 aa).

A run of 3 helical transmembrane segments spans residues 12-32 (FAIY…LAAL), 64-84 (FYLV…LFAW), and 93-113 (WVGF…LLYL).

Belongs to the complex I subunit 3 family. As to quaternary structure, NDH-1 is composed of 14 different subunits. Subunits NuoA, H, J, K, L, M, N constitute the membrane sector of the complex.

The protein localises to the cell inner membrane. It catalyses the reaction a quinone + NADH + 5 H(+)(in) = a quinol + NAD(+) + 4 H(+)(out). In terms of biological role, NDH-1 shuttles electrons from NADH, via FMN and iron-sulfur (Fe-S) centers, to quinones in the respiratory chain. The immediate electron acceptor for the enzyme in this species is believed to be ubiquinone. Couples the redox reaction to proton translocation (for every two electrons transferred, four hydrogen ions are translocated across the cytoplasmic membrane), and thus conserves the redox energy in a proton gradient. This is NADH-quinone oxidoreductase subunit A from Aeromonas salmonicida (strain A449).